The sequence spans 248 residues: UDP-2,3-diacylglucosamine hydrolase (248 aa).

Residues Asp-7, His-9, Asp-40, Asn-78, and His-113 each contribute to the Mn(2+) site. 78 to 79 (NR) is a substrate binding site. Substrate-binding residues include Asp-121, Ser-159, Thr-163, Lys-166, and His-194. Residues His-194 and His-196 each contribute to the Mn(2+) site.

Belongs to the LpxH family. The cofactor is Mn(2+).

Its subcellular location is the cell inner membrane. It catalyses the reaction UDP-2-N,3-O-bis[(3R)-3-hydroxytetradecanoyl]-alpha-D-glucosamine + H2O = 2-N,3-O-bis[(3R)-3-hydroxytetradecanoyl]-alpha-D-glucosaminyl 1-phosphate + UMP + 2 H(+). The protein operates within glycolipid biosynthesis; lipid IV(A) biosynthesis; lipid IV(A) from (3R)-3-hydroxytetradecanoyl-[acyl-carrier-protein] and UDP-N-acetyl-alpha-D-glucosamine: step 4/6. In terms of biological role, hydrolyzes the pyrophosphate bond of UDP-2,3-diacylglucosamine to yield 2,3-diacylglucosamine 1-phosphate (lipid X) and UMP by catalyzing the attack of water at the alpha-P atom. Involved in the biosynthesis of lipid A, a phosphorylated glycolipid that anchors the lipopolysaccharide to the outer membrane of the cell. This is UDP-2,3-diacylglucosamine hydrolase from Pseudomonas syringae pv. tomato (strain ATCC BAA-871 / DC3000).